We begin with the raw amino-acid sequence, 188 residues long: Probable nicotinate-nucleotide adenylyltransferase (188 aa).

This sequence belongs to the NadD family.

The enzyme catalyses nicotinate beta-D-ribonucleotide + ATP + H(+) = deamido-NAD(+) + diphosphate. Its pathway is cofactor biosynthesis; NAD(+) biosynthesis; deamido-NAD(+) from nicotinate D-ribonucleotide: step 1/1. In terms of biological role, catalyzes the reversible adenylation of nicotinate mononucleotide (NaMN) to nicotinic acid adenine dinucleotide (NaAD). The protein is Probable nicotinate-nucleotide adenylyltransferase of Listeria welshimeri serovar 6b (strain ATCC 35897 / DSM 20650 / CCUG 15529 / CIP 8149 / NCTC 11857 / SLCC 5334 / V8).